A 584-amino-acid polypeptide reads, in one-letter code: DNA ligase (584 aa).

Residue Glu-249 participates in ATP binding. Lys-251 functions as the N6-AMP-lysine intermediate in the catalytic mechanism. 6 residues coordinate ATP: Arg-256, Arg-271, Glu-301, Phe-341, Arg-416, and Lys-422.

The protein belongs to the ATP-dependent DNA ligase family. Mg(2+) serves as cofactor.

The enzyme catalyses ATP + (deoxyribonucleotide)n-3'-hydroxyl + 5'-phospho-(deoxyribonucleotide)m = (deoxyribonucleotide)n+m + AMP + diphosphate.. Its function is as follows. DNA ligase that seals nicks in double-stranded DNA during DNA replication, DNA recombination and DNA repair. The polypeptide is DNA ligase (Pyrobaculum neutrophilum (strain DSM 2338 / JCM 9278 / NBRC 100436 / V24Sta) (Thermoproteus neutrophilus)).